The sequence spans 216 residues: Ribosomal RNA large subunit methyltransferase E (216 aa).

S-adenosyl-L-methionine-binding residues include Gly-60, Trp-62, Asp-80, Asp-96, and Asp-121. The active-site Proton acceptor is the Lys-161.

This sequence belongs to the class I-like SAM-binding methyltransferase superfamily. RNA methyltransferase RlmE family.

Its subcellular location is the cytoplasm. It catalyses the reaction uridine(2552) in 23S rRNA + S-adenosyl-L-methionine = 2'-O-methyluridine(2552) in 23S rRNA + S-adenosyl-L-homocysteine + H(+). Its function is as follows. Specifically methylates the uridine in position 2552 of 23S rRNA at the 2'-O position of the ribose in the fully assembled 50S ribosomal subunit. The polypeptide is Ribosomal RNA large subunit methyltransferase E (Pseudomonas fluorescens (strain SBW25)).